Here is a 56-residue protein sequence, read N- to C-terminus: Large ribosomal subunit protein bL32 (56 aa).

The interval 1 to 38 is disordered; that stretch reads MAVQQNKKSRSRRDMRRSHDALTTAAVSVDKTSGETHL. A compositionally biased stretch (basic residues) spans 7-16; that stretch reads KKSRSRRDMR.

The protein belongs to the bacterial ribosomal protein bL32 family.

This is Large ribosomal subunit protein bL32 from Histophilus somni (strain 129Pt) (Haemophilus somnus).